The chain runs to 247 residues: Phosphoribosylaminoimidazole-succinocarboxamide synthase (247 aa).

The protein belongs to the SAICAR synthetase family.

It catalyses the reaction 5-amino-1-(5-phospho-D-ribosyl)imidazole-4-carboxylate + L-aspartate + ATP = (2S)-2-[5-amino-1-(5-phospho-beta-D-ribosyl)imidazole-4-carboxamido]succinate + ADP + phosphate + 2 H(+). Its pathway is purine metabolism; IMP biosynthesis via de novo pathway; 5-amino-1-(5-phospho-D-ribosyl)imidazole-4-carboxamide from 5-amino-1-(5-phospho-D-ribosyl)imidazole-4-carboxylate: step 1/2. In Synechococcus sp. (strain JA-2-3B'a(2-13)) (Cyanobacteria bacterium Yellowstone B-Prime), this protein is Phosphoribosylaminoimidazole-succinocarboxamide synthase.